The primary structure comprises 533 residues: Early growth response protein 1 (533 aa).

Disordered stretches follow at residues 1–94 (MAAA…EQPY) and 161–237 (MTNP…PPPA). The segment covering 68–77 (SGGGGGGGSN) has biased composition (gly residues). Residues 164-189 (PPTSSSSAPSPAASSSSSASQSPPLS) are compositionally biased toward low complexity. A Glycyl lysine isopeptide (Lys-Gly) (interchain with G-Cter in SUMO2) cross-link involves residue lysine 303. Positions 316–336 (PSRMRKYPNRPSKTPPHERPY) are disordered. 3 consecutive C2H2-type zinc fingers follow at residues 336–360 (YACPVESCDRRFSRSDELTRHIRIH), 366–388 (FQCRICMRNFSRSDHLTTHIRTH), and 394–416 (FACDICGRKFARSDERKRHTKIH). The segment at 407–478 (DERKRHTKIH…SSTYPSPAHS (72 aa)) is disordered. Residues 411-421 (RHTKIHLRQKD) show a composition bias toward basic residues. The span at 427 to 475 (SVVASPAASSLSSYPSPVATSYPSPATTSFPSPVPTSYSSPGSSTYPSP) shows a compositional bias: low complexity.

Belongs to the EGR C2H2-type zinc-finger protein family. As to quaternary structure, interacts with SNAI1 and SP1 upon 12-O-tetradecanoylphorbol-13-acetate (TPA) induction. In terms of tissue distribution, detected in lung vasculature and in mononuclear phagocytes. Detected in liver (at protein level). Expressed in the liver in a circadian manner.

It localises to the nucleus. It is found in the cytoplasm. Functionally, transcriptional regulator. Recognizes and binds to the DNA sequence 5'-GCG(T/G)GGGCG-3'(EGR-site) in the promoter region of target genes. Binds double-stranded target DNA, irrespective of the cytosine methylation status. Regulates the transcription of numerous target genes, and thereby plays an important role in regulating the response to growth factors, DNA damage, and ischemia. Plays a role in the regulation of cell survival, proliferation and cell death. Activates expression of p53/TP53 and TGFB1, and thereby helps prevent tumor formation. Required for normal progress through mitosis and normal proliferation of hepatocytes after partial hepatectomy. Mediates responses to ischemia and hypoxia; regulates the expression of proteins such as IL1B and CXCL2 that are involved in inflammatory processes and development of tissue damage after ischemia. Regulates biosynthesis of luteinizing hormone (LHB) in the pituitary. Regulates the amplitude of the expression rhythms of clock genes: BMAL1, PER2 and NR1D1 in the liver via the activation of PER1 (clock repressor) transcription. Regulates the rhythmic expression of core-clock gene BMAL1 in the suprachiasmatic nucleus (SCN). This Mus musculus (Mouse) protein is Early growth response protein 1 (Egr1).